The sequence spans 359 residues: Putative cyclin-F1-2 (359 aa).

It belongs to the cyclin family. Cyclin F subfamily.

This chain is Putative cyclin-F1-2 (CYCF1-2), found in Oryza sativa subsp. japonica (Rice).